We begin with the raw amino-acid sequence, 445 residues long: 3-phosphoshikimate 1-carboxyvinyltransferase (445 aa).

3-phosphoshikimate-binding residues include lysine 34, serine 35, and arginine 39. Lysine 34 is a phosphoenolpyruvate binding site. Glycine 112 and arginine 140 together coordinate phosphoenolpyruvate. Residues serine 186, serine 187, glutamine 188, serine 216, glutamate 331, and histidine 358 each contribute to the 3-phosphoshikimate site. Glutamine 188 contributes to the phosphoenolpyruvate binding site. The Proton acceptor role is filled by glutamate 331. Residues arginine 362, arginine 403, and lysine 428 each contribute to the phosphoenolpyruvate site.

The protein belongs to the EPSP synthase family. Monomer.

It is found in the cytoplasm. It catalyses the reaction 3-phosphoshikimate + phosphoenolpyruvate = 5-O-(1-carboxyvinyl)-3-phosphoshikimate + phosphate. Its pathway is metabolic intermediate biosynthesis; chorismate biosynthesis; chorismate from D-erythrose 4-phosphate and phosphoenolpyruvate: step 6/7. Functionally, catalyzes the transfer of the enolpyruvyl moiety of phosphoenolpyruvate (PEP) to the 5-hydroxyl of shikimate-3-phosphate (S3P) to produce enolpyruvyl shikimate-3-phosphate and inorganic phosphate. This Kocuria rhizophila (strain ATCC 9341 / DSM 348 / NBRC 103217 / DC2201) protein is 3-phosphoshikimate 1-carboxyvinyltransferase.